A 293-amino-acid chain; its full sequence is Proline iminopeptidase (293 aa).

Residues 28–277 (PLVLLHGGPG…NCSHMSFVQK (250 aa)) enclose the AB hydrolase-1 domain. The Nucleophile role is filled by Ser105. Asp244 is a catalytic residue. His271 (proton donor) is an active-site residue.

This sequence belongs to the peptidase S33 family.

The protein resides in the cell envelope. It catalyses the reaction Release of N-terminal proline from a peptide.. Releases the N-terminal proline from various substrates. The chain is Proline iminopeptidase from Lactobacillus acidophilus (strain ATCC 700396 / NCK56 / N2 / NCFM).